The primary structure comprises 235 residues: Putative quercetin 2,3-dioxygenase ZMO1337 (235 aa).

A divalent metal cation is bound by residues H57, H59, H101, and E103.

It belongs to the pirin family. Requires a divalent metal cation as cofactor.

It carries out the reaction quercetin + O2 = 2-(3,4-dihydroxybenzoyloxy)-4,6-dihydroxybenzoate + CO. It functions in the pathway flavonoid metabolism; quercetin degradation. Putative quercetin 2,3-dioxygenase. This Zymomonas mobilis subsp. mobilis (strain ATCC 31821 / ZM4 / CP4) protein is Putative quercetin 2,3-dioxygenase ZMO1337.